A 392-amino-acid chain; its full sequence is Major outer membrane porin (392 aa).

The first 22 residues, 1 to 22, serve as a signal peptide directing secretion; sequence MKKLLKSALLFAAAGSALSLQA.

This sequence belongs to the chlamydial porin (CP) (TC 1.B.2) family. In terms of assembly, part of a disulfide cross-linked outer membrane complex (COMC) composed of the major outer membrane porin (MOMP), the small cysteine-rich protein (OmcA) and the large cysteine-rich periplasmic protein (OmcB).

It localises to the cell outer membrane. In terms of biological role, in elementary bodies (EBs, the infectious stage, which is able to survive outside the host cell) provides the structural integrity of the outer envelope through disulfide cross-links with the small cysteine-rich protein and the large cysteine-rich periplasmic protein. It has been described in publications as the Sarkosyl-insoluble COMC (Chlamydia outer membrane complex), and serves as the functional equivalent of peptidoglycan. Its function is as follows. Permits diffusion of specific solutes through the outer membrane. This chain is Major outer membrane porin (ompA), found in Chlamydia psittaci (Chlamydophila psittaci).